Consider the following 151-residue polypeptide: Large ribosomal subunit protein bL9 (151 aa).

It belongs to the bacterial ribosomal protein bL9 family.

In terms of biological role, binds to the 23S rRNA. The polypeptide is Large ribosomal subunit protein bL9 (Prochlorococcus marinus (strain MIT 9312)).